A 245-amino-acid polypeptide reads, in one-letter code: MSQPKALLRRDGFTFKQFFVAHDRCAMKVGTDGILLGAWAPVAGVKRILDIGSGSGLLALMLAQRTEQHVTIDSVELDAQAANQASENAAESPWAERVQVQCADILAWAPEQTARYDLIVSNPPYYEPGVDCGTPEREQARYTGSLGHPALLAAAANLISEEGFFCVVLPENTGNTFIKTALDIGWFLRLRTDIADTDGKLPHRVLLALSPKEGECFSDRMVIRGPDQRYSEDYTALTQAFYLFM.

The protein belongs to the methyltransferase superfamily. tRNA (adenine-N(6)-)-methyltransferase family.

It localises to the cytoplasm. The enzyme catalyses adenosine(37) in tRNA1(Val) + S-adenosyl-L-methionine = N(6)-methyladenosine(37) in tRNA1(Val) + S-adenosyl-L-homocysteine + H(+). Specifically methylates the adenine in position 37 of tRNA(1)(Val) (anticodon cmo5UAC). This Enterobacter sp. (strain 638) protein is tRNA1(Val) (adenine(37)-N6)-methyltransferase.